A 415-amino-acid polypeptide reads, in one-letter code: Very late expression factor 1 (415 aa).

A Tyr recombinase domain is found at 171-357; the sequence is REIINTILDC…DESDDNDEDD (187 aa). Residues R214, K242, R307, and H330 contribute to the active site. The interval 339–415 is disordered; that stretch reads YLNKYDVGVD…GDDADLLSFN (77 aa). The O-(3'-phospho-DNA)-tyrosine intermediate role is filled by Y343. Positions 346–363 are enriched in acidic residues; sequence GVDESDDNDEDDDDDEND. Residues 375-404 show a composition bias toward low complexity; that stretch reads NISNYDINNSSSGNSSSNNTSGNDFNNNIS.

The protein belongs to the 'phage' integrase family.

In terms of biological role, involved in very late gene activation. The protein is Very late expression factor 1 (VLF-1) of Heliothis zea nuclear polyhedrosis virus (HzSNPV).